Here is a 322-residue protein sequence, read N- to C-terminus: Large ribosomal subunit protein uL15m (322 aa).

The transit peptide at 1–57 (MKAERQTGLRNSFTTVIGRKLINTFVPSMMLTSVAGNDIFFRGLFKSPVLAFQSYRY) directs the protein to the mitochondrion. Residues 69–99 (GSTKSFKRLGRGPSSGLGKTSGRGQKGQKAR) form a disordered region. The span at 81 to 93 (PSSGLGKTSGRGQ) shows a compositional bias: gly residues.

Belongs to the universal ribosomal protein uL15 family. Component of the mitochondrial large ribosomal subunit (mt-LSU). Mature yeast 74S mitochondrial ribosomes consist of a small (37S) and a large (54S) subunit. The 37S small subunit contains a 15S ribosomal RNA (15S mt-rRNA) and 34 different proteins. The 54S large subunit contains a 21S rRNA (21S mt-rRNA) and 46 different proteins.

It is found in the mitochondrion. In terms of biological role, component of the mitochondrial ribosome (mitoribosome), a dedicated translation machinery responsible for the synthesis of mitochondrial genome-encoded proteins, including at least some of the essential transmembrane subunits of the mitochondrial respiratory chain. The mitoribosomes are attached to the mitochondrial inner membrane and translation products are cotranslationally integrated into the membrane. In Saccharomyces cerevisiae (strain ATCC 204508 / S288c) (Baker's yeast), this protein is Large ribosomal subunit protein uL15m (MRPL10).